A 224-amino-acid chain; its full sequence is TBP-related factor (224 aa).

The disordered stretch occupies residues 14–34; that stretch reads RDNVAATSNAAANPHAALQPQ. Residues 17-34 are compositionally biased toward low complexity; sequence VAATSNAAANPHAALQPQ. 2 repeat units span residues 51–127 and 141–218.

Belongs to the TBP family. As to expression, primary spermatocytes in the adult testis and in a subset of cells in the dorsal medial region of the embryonic CNS.

Its subcellular location is the nucleus. In terms of biological role, acts as a transcription factor. Binds to the TATA box promoter element which lies close to the position of transcription initiation. May be essential for embryonic development. This chain is TBP-related factor (Trf), found in Drosophila melanogaster (Fruit fly).